The sequence spans 167 residues: MPGNRPHYGRWPQHDFPPFKKLRPQSVTSRIQPGSDVIVCAEMDEQWGYVGAKSRQRWLFYAYDRLRKTVVAHVFGERTMATLGRLMSLLSPFDVVIWMTDGWPLYESRLKGKLHVISKRYTQRIERHNLNLRQHLARLGRKSLSFSKSVEQHDKVIGHYLNIKHYQ.

It belongs to the transposase 27 family.

In terms of biological role, absolutely required for transposition of IS1. The protein is Insertion element IS1 2 protein InsB (insB2) of Escherichia coli (strain K12).